We begin with the raw amino-acid sequence, 213 residues long: Orotate phosphoribosyltransferase (213 aa).

Residue Lys-26 coordinates 5-phospho-alpha-D-ribose 1-diphosphate. 34 to 35 (FF) provides a ligand contact to orotate. 5-phospho-alpha-D-ribose 1-diphosphate-binding positions include 72–73 (YK), Arg-99, Lys-100, Lys-103, His-105, and 124–132 (DDVITAGTA). Orotate-binding residues include Thr-128 and Arg-156.

The protein belongs to the purine/pyrimidine phosphoribosyltransferase family. PyrE subfamily. As to quaternary structure, homodimer. Requires Mg(2+) as cofactor.

It catalyses the reaction orotidine 5'-phosphate + diphosphate = orotate + 5-phospho-alpha-D-ribose 1-diphosphate. The protein operates within pyrimidine metabolism; UMP biosynthesis via de novo pathway; UMP from orotate: step 1/2. Functionally, catalyzes the transfer of a ribosyl phosphate group from 5-phosphoribose 1-diphosphate to orotate, leading to the formation of orotidine monophosphate (OMP). This chain is Orotate phosphoribosyltransferase, found in Shigella sonnei (strain Ss046).